Reading from the N-terminus, the 415-residue chain is Glutamyl-tRNA reductase (415 aa).

Substrate is bound by residues 49-52 (TCNR), S104, 109-111 (EPQ), and Q115. C50 acts as the Nucleophile in catalysis. 184–189 (GAGEMI) provides a ligand contact to NADP(+).

The protein belongs to the glutamyl-tRNA reductase family. Homodimer.

The catalysed reaction is (S)-4-amino-5-oxopentanoate + tRNA(Glu) + NADP(+) = L-glutamyl-tRNA(Glu) + NADPH + H(+). It functions in the pathway porphyrin-containing compound metabolism; protoporphyrin-IX biosynthesis; 5-aminolevulinate from L-glutamyl-tRNA(Glu): step 1/2. Catalyzes the NADPH-dependent reduction of glutamyl-tRNA(Glu) to glutamate 1-semialdehyde (GSA). This chain is Glutamyl-tRNA reductase, found in Neisseria meningitidis serogroup C / serotype 2a (strain ATCC 700532 / DSM 15464 / FAM18).